The following is a 337-amino-acid chain: Monoacylglycerol lipase ABHD6 (337 aa).

Topologically, residues 1 to 19 are extracellular; it reads MDLDVVNMFVIAGGTLALP. The chain crosses the membrane as a helical; Signal-anchor for type II membrane protein span at residues 20–42; sequence ILAFVASFLLWPSALIRIYYWYW. The Cytoplasmic segment spans residues 43–337; it reads RRTLGMQVRY…HSTDNSKKLD (295 aa). One can recognise an AB hydrolase-1 domain in the interval 72–313; sequence PSILMLHGFS…CGHSVVMERP (242 aa). Ser148 functions as the Nucleophile in the catalytic mechanism. Active-site charge relay system residues include Asp278 and His306.

The protein belongs to the AB hydrolase superfamily.

The protein resides in the late endosome membrane. It is found in the lysosome membrane. Its subcellular location is the mitochondrion membrane. The catalysed reaction is Hydrolyzes glycerol monoesters of long-chain fatty acids.. It catalyses the reaction 1-octanoylglycerol + H2O = octanoate + glycerol + H(+). The enzyme catalyses 1-decanoylglycerol + H2O = decanoate + glycerol + H(+). It carries out the reaction 1-dodecanoylglycerol + H2O = dodecanoate + glycerol + H(+). The catalysed reaction is 1-tetradecanoylglycerol + H2O = tetradecanoate + glycerol + H(+). It catalyses the reaction 2-hexadecanoylglycerol + H2O = glycerol + hexadecanoate + H(+). The enzyme catalyses 2-(9Z-octadecenoyl)-glycerol + H2O = glycerol + (9Z)-octadecenoate + H(+). It carries out the reaction 1-(9Z-octadecenoyl)-glycerol + H2O = glycerol + (9Z)-octadecenoate + H(+). The catalysed reaction is 2-(9Z,12Z-octadecadienoyl)-glycerol + H2O = (9Z,12Z)-octadecadienoate + glycerol + H(+). It catalyses the reaction 2-(5Z,8Z,11Z,14Z-eicosatetraenoyl)-glycerol + H2O = glycerol + (5Z,8Z,11Z,14Z)-eicosatetraenoate + H(+). The enzyme catalyses 1-(5Z,8Z,11Z,14Z-eicosatetraenoyl)-glycerol + H2O = glycerol + (5Z,8Z,11Z,14Z)-eicosatetraenoate + H(+). It carries out the reaction 1-(9Z,12Z-octadecadienoyl)-glycerol + H2O = (9Z,12Z)-octadecadienoate + glycerol + H(+). The catalysed reaction is 3-(9Z-octadecenoyl)-sn-glycero-1-phospho-(3'-(9Z-octadecenoyl)-1'-sn-glycerol) + H2O = 3-(9Z-octadecenoyl)-sn-glycero-1-phospho-(1'-sn-glycerol) + (9Z)-octadecenoate + H(+). It catalyses the reaction (S,S)-2-(9Z-octadecenoyl)-sn-glycero-1-phospho-(2'-(9Z-octadecenoyl)-1'-sn-glycerol) + H2O = (S,S)-2-(9Z-octadecenoyl)-sn-glycero-1-phospho-(1'-sn-glycerol) + (9Z)-octadecenoate + H(+). The enzyme catalyses (R,R)-2-(9Z-octadecenoyl)-sn-glycero-3-phospho-(2'-(9Z-octadecenoyl)-3'-sn-glycerol) + H2O = (R,R)-2-(9Z-octadecenoyl)-sn-glycero-3-phospho-(3'-sn-glycerol) + (9Z)-octadecenoate + H(+). Its function is as follows. Lipase that preferentially hydrolysis medium-chain saturated monoacylglycerols including 2-arachidonoylglycerol. Through 2-arachidonoylglycerol degradation may regulate endocannabinoid signaling pathways. Also has a lysophosphatidyl lipase activity with a preference for lysophosphatidylglycerol among other lysophospholipids. Also able to degrade bis(monoacylglycero)phosphate (BMP) and constitutes the major enzyme for BMP catabolism. BMP, also known as lysobisphosphatidic acid, is enriched in late endosomes and lysosomes and plays a key role in the formation of intraluminal vesicles and in lipid sorting. In Bos taurus (Bovine), this protein is Monoacylglycerol lipase ABHD6.